The following is a 145-amino-acid chain: Neuropeptide-like protein 68 (145 aa).

An N-terminal signal peptide occupies residues 1 to 15 (MLLVLLFSLFSVGFG). Positions 41-65 (SSSSEDDTPDFPSLRDKRGVDPMSI) are disordered.

The protein resides in the secreted. In Caenorhabditis elegans, this protein is Neuropeptide-like protein 68.